A 583-amino-acid polypeptide reads, in one-letter code: Tetratricopeptide repeat protein 39C (583 aa).

A disordered region spans residues 1–22 (MAGSEQQRPRRRDDGDSDAAAA). TPR repeat units follow at residues 315–348 (SLFM…AVDQ), 353–386 (HVCL…SRWS), and 485–518 (GLKY…ELCR).

Belongs to the TTC39 family.

The polypeptide is Tetratricopeptide repeat protein 39C (TTC39C) (Homo sapiens (Human)).